The sequence spans 305 residues: Carbamate kinase (305 aa).

It belongs to the carbamate kinase family.

It is found in the cytoplasm. The catalysed reaction is hydrogencarbonate + NH4(+) + ATP = carbamoyl phosphate + ADP + H2O + H(+). Its pathway is metabolic intermediate metabolism; carbamoyl phosphate degradation; CO(2) and NH(3) from carbamoyl phosphate: step 1/1. The chain is Carbamate kinase (arcC) from Thermoplasma acidophilum (strain ATCC 25905 / DSM 1728 / JCM 9062 / NBRC 15155 / AMRC-C165).